The chain runs to 218 residues: Cytochrome b6 (218 aa).

The chain crosses the membrane as a helical span at residues 35–55; that stretch reads IFYCLGGITLVCFLIQFATGF. Cys-38 contributes to the heme c binding site. Positions 89 and 103 each coordinate heme b. The next 3 helical transmembrane spans lie at 93 to 113, 119 to 139, and 189 to 209; these read ASMM…TGGF, LTWV…VTGY, and LHTF…FLMI. Residues His-190 and His-205 each contribute to the heme b site.

Belongs to the cytochrome b family. PetB subfamily. As to quaternary structure, the 4 large subunits of the cytochrome b6-f complex are cytochrome b6, subunit IV (17 kDa polypeptide, PetD), cytochrome f and the Rieske protein, while the 4 small subunits are PetG, PetL, PetM and PetN. The complex functions as a dimer. Heme b serves as cofactor. Heme c is required as a cofactor.

The protein resides in the cellular thylakoid membrane. In terms of biological role, component of the cytochrome b6-f complex, which mediates electron transfer between photosystem II (PSII) and photosystem I (PSI), cyclic electron flow around PSI, and state transitions. This is Cytochrome b6 from Prochlorococcus marinus (strain MIT 9211).